The following is a 459-amino-acid chain: Ribulose bisphosphate carboxylase large chain (459 aa).

Lys-4 is subject to N6,N6,N6-trimethyllysine. Substrate-binding residues include Asn-113 and Thr-163. The active-site Proton acceptor is Lys-165. A substrate-binding site is contributed by Lys-167. Mg(2+) is bound by residues Lys-191, Asp-193, and Glu-194. N6-carboxylysine is present on Lys-191. The active-site Proton acceptor is the His-284. The substrate site is built by Arg-285, His-317, and Ser-369.

The protein belongs to the RuBisCO large chain family. Type I subfamily. As to quaternary structure, heterohexadecamer of 8 large chains and 8 small chains; disulfide-linked. The disulfide link is formed within the large subunit homodimers. The cofactor is Mg(2+). In terms of processing, the disulfide bond which can form in the large chain dimeric partners within the hexadecamer appears to be associated with oxidative stress and protein turnover.

The protein resides in the plastid. It localises to the chloroplast. The enzyme catalyses 2 (2R)-3-phosphoglycerate + 2 H(+) = D-ribulose 1,5-bisphosphate + CO2 + H2O. It carries out the reaction D-ribulose 1,5-bisphosphate + O2 = 2-phosphoglycolate + (2R)-3-phosphoglycerate + 2 H(+). In terms of biological role, ruBisCO catalyzes two reactions: the carboxylation of D-ribulose 1,5-bisphosphate, the primary event in carbon dioxide fixation, as well as the oxidative fragmentation of the pentose substrate in the photorespiration process. Both reactions occur simultaneously and in competition at the same active site. The polypeptide is Ribulose bisphosphate carboxylase large chain (Ceratopetalum gummiferum (New South Wales Christmas bush)).